Here is a 316-residue protein sequence, read N- to C-terminus: Ribosomal RNA small subunit methyltransferase H (316 aa).

Residues 37 to 39, D56, F83, D106, and H113 contribute to the S-adenosyl-L-methionine site; that span reads GGH. Residues 276–316 are disordered; sequence PILPSEEETKENPASRSAKLRVLRKTKSADKKYKKENSKEE. The span at 302–316 shows a compositional bias: basic and acidic residues; the sequence is KSADKKYKKENSKEE.

Belongs to the methyltransferase superfamily. RsmH family.

It is found in the cytoplasm. It catalyses the reaction cytidine(1402) in 16S rRNA + S-adenosyl-L-methionine = N(4)-methylcytidine(1402) in 16S rRNA + S-adenosyl-L-homocysteine + H(+). Specifically methylates the N4 position of cytidine in position 1402 (C1402) of 16S rRNA. The polypeptide is Ribosomal RNA small subunit methyltransferase H (Leptospira borgpetersenii serovar Hardjo-bovis (strain JB197)).